Consider the following 84-residue polypeptide: Small ribosomal subunit protein uS17 (84 aa).

This sequence belongs to the universal ribosomal protein uS17 family. Part of the 30S ribosomal subunit.

One of the primary rRNA binding proteins, it binds specifically to the 5'-end of 16S ribosomal RNA. In Photobacterium profundum (strain SS9), this protein is Small ribosomal subunit protein uS17.